The sequence spans 303 residues: ATP synthase gamma chain (303 aa).

This sequence belongs to the ATPase gamma chain family. In terms of assembly, F-type ATPases have 2 components, CF(1) - the catalytic core - and CF(0) - the membrane proton channel. CF(1) has five subunits: alpha(3), beta(3), gamma(1), delta(1), epsilon(1). CF(0) has three main subunits: a, b and c.

The protein localises to the cell membrane. In terms of biological role, produces ATP from ADP in the presence of a proton gradient across the membrane. The gamma chain is believed to be important in regulating ATPase activity and the flow of protons through the CF(0) complex. In Nocardioides sp. (strain ATCC BAA-499 / JS614), this protein is ATP synthase gamma chain.